Consider the following 240-residue polypeptide: MORN repeat-containing protein 3 (240 aa).

Positions 6 to 35 (CPKKSESLWKGWDRKAQRNGLRSQVYAVNG) are interaction with MDM2. MORN repeat units follow at residues 38 to 60 (YVGE…KKGA), 62 to 84 (YEGD…DQQT), 91 to 113 (YSGW…PKEY), 114 to 136 (YEGD…NGDI), 137 to 159 (YEGQ…NGNR), 160 to 182 (YEGC…DHGQ), and 184 to 205 (FEGF…GRDE). Residues 76-100 (TLSLPDQQTGKCRRVYSGWWKGDKK) are interaction with SIRT1. Positions 206 to 240 (APEPTQFPIPEVKILDPDGVLAEALAMFRKTEEGD) are interaction with TP53.

As to quaternary structure, interacts with MEIG1. Interacts with TP53, MDM2 and SIRT1; the interactions mediate post-transcriptional modifications of TP53 by MDM2 and SIRT1.

Its subcellular location is the cytoplasmic vesicle. It is found in the secretory vesicle. It localises to the acrosome. Functionally, assembles a suppression complex (suppresome) by tethering SIRT1 and MDM2 to regulate composite modifications of p53/TP53. Confers both deacetylation-mediated functional inactivation, by SIRT1, and ubiquitination-dependent degradation, by MDM2, of p53/TP53, promoting a proliferative and cell survival behaviors. May play a role in the regulation of spermatogenesis. This chain is MORN repeat-containing protein 3, found in Homo sapiens (Human).